An 86-amino-acid chain; its full sequence is Small ribosomal subunit protein bS20 (86 aa).

Residues 1–25 (MANIKSQQKRNRTNERARLRNKAVK) form a disordered region.

The protein belongs to the bacterial ribosomal protein bS20 family.

In terms of biological role, binds directly to 16S ribosomal RNA. The polypeptide is Small ribosomal subunit protein bS20 (Mycobacterium bovis (strain ATCC BAA-935 / AF2122/97)).